Consider the following 291-residue polypeptide: Protease HtpX homolog (291 aa).

2 helical membrane-spanning segments follow: residues 4–24 and 38–58; these read VFLF…SARL and LGML…ISLL. Residue histidine 144 participates in Zn(2+) binding. Glutamate 145 is an active-site residue. Histidine 148 is a Zn(2+) binding site. The next 2 helical transmembrane spans lie at 159-179 and 199-219; these read LIQG…AYAL and ISSI…VMYF. Glutamate 224 lines the Zn(2+) pocket.

This sequence belongs to the peptidase M48B family. Requires Zn(2+) as cofactor.

It is found in the cell inner membrane. The chain is Protease HtpX homolog from Chlorobium luteolum (strain DSM 273 / BCRC 81028 / 2530) (Pelodictyon luteolum).